We begin with the raw amino-acid sequence, 207 residues long: ADP-ribose pyrophosphatase (207 aa).

Substrate-binding positions include 37–38 and Arg64; that span reads RE. Positions 41-172 constitute a Nudix hydrolase domain; sequence EHFGAVAIVA…EIVNSIAIAG (132 aa). Ala76 lines the Mg(2+) pocket. The short motif at 77–99 is the Nudix box element; it reads GLLDVAGEPPHLTAARELREEVG. Leu78 contacts substrate. Glu93 and Glu97 together coordinate Mg(2+). Substrate is bound by residues 114–116 and Glu120; that span reads APG. Glu142 is a Mg(2+) binding site. The Proton acceptor role is filled by Glu142.

Belongs to the Nudix hydrolase family. As to quaternary structure, homodimer. The cofactor is Mg(2+). It depends on Mn(2+) as a cofactor.

The enzyme catalyses ADP-D-ribose + H2O = D-ribose 5-phosphate + AMP + 2 H(+). It carries out the reaction 8-oxo-dGDP + H2O = 8-oxo-dGMP + phosphate + H(+). The catalysed reaction is 8-oxo-GDP + H2O = 8-oxo-GMP + phosphate + H(+). Functionally, catalyzes the hydrolysis of ADP-ribose (ADPR) to AMP and ribose-5-phosphate. Can also hydrolyze ADP-mannose and ADP-glucose, with lower efficiency. Has weaker activity with NAD, GDP-sugars and UDP-sugars. Also catalyzes the conversion of 8-oxo-dGDP to 8-oxo-dGMP, and 8-oxo-GDP to 8-oxo-GMP. Functions in concert with MutT1 to detoxify 8-oxo-dGTP to 8-oxo-dGMP and may play an important role in supporting cellular growth under oxidative stress. The catalytic efficiency is much higher for the hydrolysis of ADPR than 8-oxo-dGTP, suggesting a more relevant biological role in hydrolysis of ADPR. In Mycobacterium tuberculosis (strain ATCC 25618 / H37Rv), this protein is ADP-ribose pyrophosphatase.